Reading from the N-terminus, the 415-residue chain is MSDHLLRDEHQENVQPRKLLVPVGGRTVLGVLQENHRGPKALKVSKPALQQTQVLSVNHLGVNDENYGKIPARKAASKQPAFTIHVDEPDCATNKRKAVHKKTVQDENLQQLNSVLGSIGTRKPLHPIQIAMETSFGSPMDVSIVDEEQKVVGCNNVADYAKEIHTYLREMEVKCKPKAGYMQKQPDITGNMRAILVDWLVEVGEEYKLQNETLYLAVNYIDRFLSSMSVLRGKLQLVGTAAMLLASKFEEIYPPEVAEFVYITDDTYTKKQVLKMEHLVLKVLSFDLAAPTILQYLNQYFQIHPVSPKVESLSMFLGELSLVDADPFLRYLPSVVAAAAFVIANCTINERTWSDPLVEYTSYTLETLKPCILDLYQTYLSAASHQQQAVREKYKAPKNHAVSLIIPPESMSTFL.

It belongs to the cyclin family. Cyclin AB subfamily. As to quaternary structure, interacts with the CDK1 and CDK2 protein kinases to form serine/threonine kinase holoenzyme complexes. In terms of tissue distribution, ubiquitous.

It is found in the nucleus. The protein localises to the cytoplasm. Its function is as follows. Cyclin which controls both the G1/S and the G2/M transition phases of the cell cycle. Functions through the formation of specific serine/threonine kinase holoenzyme complexes with the cyclin-dependent protein kinases CDK1 and CDK2. The cyclin subunit confers the substrate specificity of these complexes and differentially interacts with and activates CDK1 and CDK2 throughout the cell cycle. This Xenopus laevis (African clawed frog) protein is Cyclin-A2 (ccna2).